Here is a 210-residue protein sequence, read N- to C-terminus: Leucyl/phenylalanyl-tRNA--protein transferase (210 aa).

Belongs to the L/F-transferase family.

The protein resides in the cytoplasm. It catalyses the reaction N-terminal L-lysyl-[protein] + L-leucyl-tRNA(Leu) = N-terminal L-leucyl-L-lysyl-[protein] + tRNA(Leu) + H(+). The enzyme catalyses N-terminal L-arginyl-[protein] + L-leucyl-tRNA(Leu) = N-terminal L-leucyl-L-arginyl-[protein] + tRNA(Leu) + H(+). It carries out the reaction L-phenylalanyl-tRNA(Phe) + an N-terminal L-alpha-aminoacyl-[protein] = an N-terminal L-phenylalanyl-L-alpha-aminoacyl-[protein] + tRNA(Phe). Its function is as follows. Functions in the N-end rule pathway of protein degradation where it conjugates Leu, Phe and, less efficiently, Met from aminoacyl-tRNAs to the N-termini of proteins containing an N-terminal arginine or lysine. The chain is Leucyl/phenylalanyl-tRNA--protein transferase from Ruegeria pomeroyi (strain ATCC 700808 / DSM 15171 / DSS-3) (Silicibacter pomeroyi).